Reading from the N-terminus, the 442-residue chain is Proline--tRNA ligase (442 aa).

It belongs to the class-II aminoacyl-tRNA synthetase family. ProS type 2 subfamily. As to quaternary structure, homodimer.

It is found in the cytoplasm. The catalysed reaction is tRNA(Pro) + L-proline + ATP = L-prolyl-tRNA(Pro) + AMP + diphosphate. In terms of biological role, catalyzes the attachment of proline to tRNA(Pro) in a two-step reaction: proline is first activated by ATP to form Pro-AMP and then transferred to the acceptor end of tRNA(Pro). The polypeptide is Proline--tRNA ligase (Brucella abortus (strain S19)).